A 96-amino-acid polypeptide reads, in one-letter code: Integration host factor subunit alpha (96 aa).

This sequence belongs to the bacterial histone-like protein family. In terms of assembly, heterodimer of an alpha and a beta chain.

This protein is one of the two subunits of integration host factor, a specific DNA-binding protein that functions in genetic recombination as well as in transcriptional and translational control. The chain is Integration host factor subunit alpha from Haemophilus influenzae (strain 86-028NP).